The following is a 337-amino-acid chain: Probable RuBisCO transcriptional regulator (337 aa).

The 58-residue stretch at 6–63 folds into the HTH lysR-type domain; that stretch reads FTLDQLRILKAIAVEGSFKRAADSLYVSQPAVSLQVQNLERQLDVPLFDRGGRRAQLT. Residues 23-42 constitute a DNA-binding region (H-T-H motif); that stretch reads FKRAADSLYVSQPAVSLQVQ.

Belongs to the LysR transcriptional regulatory family.

Functionally, trans-acting transcriptional regulator of RuBisCO genes (rbcL and rbcS) expression. The polypeptide is Probable RuBisCO transcriptional regulator (rbcR) (Nostoc sp. (strain PCC 7120 / SAG 25.82 / UTEX 2576)).